The chain runs to 451 residues: uncharacterized protein (451 aa).

2 disordered regions span residues 89–150 (PRLS…ISRY) and 164–222 (QVGE…KTFG). A compositionally biased stretch (polar residues) spans 104-121 (QKPTISRESFVWESSASI). A compositionally biased stretch (low complexity) spans 137–147 (SSTPSIEPESI). The span at 175 to 222 (RAADSENERRPSEVREAPESRRRRETSETGSDKSKAPPPIKEIKKTFG) shows a compositional bias: basic and acidic residues. A helical transmembrane segment spans residues 358 to 376 (LIGLMLFQTTIFIISKIIA). Residues 401–451 (RNGSSSGFASGTSSPLVFIPRTKRPSLVPSEKKMRGPSVTRDLAAEQERDA) form a disordered region. Low complexity predominate over residues 403 to 414 (GSSSGFASGTSS).

Belongs to the IIV-6 067R family.

Its subcellular location is the membrane. This is an uncharacterized protein from Invertebrate iridescent virus 3 (IIV-3).